The sequence spans 76 residues: Putative phosphotransferase enzyme IIA component YyzE (76 aa).

Positions 1–76 (MVTPTKHAIG…LHQKIFTVVS (76 aa)) constitute a PTS EIIA type-1 domain. Catalysis depends on histidine 22, which acts as the Tele-phosphohistidine intermediate.

The protein resides in the cytoplasm. Functionally, the phosphoenolpyruvate-dependent sugar phosphotransferase system (PTS), a major carbohydrate active -transport system, catalyzes the phosphorylation of incoming sugar substrates concomitant with their translocation across the cell membrane. This chain is Putative phosphotransferase enzyme IIA component YyzE (yyzE), found in Bacillus subtilis (strain 168).